Here is a 349-residue protein sequence, read N- to C-terminus: Cytoplasmic tRNA 2-thiolation protein 2 (349 aa).

Belongs to the CTU2/NCS2 family.

The protein resides in the cytoplasm. It participates in tRNA modification; 5-methoxycarbonylmethyl-2-thiouridine-tRNA biosynthesis. In terms of biological role, plays a central role in 2-thiolation of mcm(5)S(2)U at tRNA wobble positions of tRNA(Lys), tRNA(Glu) and tRNA(Gln). May act by forming a heterodimer with tut-1/ctu-1 that ligates sulfur from thiocarboxylated urm-1 onto the uridine of tRNAs at wobble position. The sequence is that of Cytoplasmic tRNA 2-thiolation protein 2 from Caenorhabditis briggsae.